Reading from the N-terminus, the 710-residue chain is Ribonuclease R (710 aa).

Residues 246-573 (RKDLRDKVIV…VHRLLKLYLE (328 aa)) form the RNB domain. The 81-residue stretch at 625–705 (GEVFNVVVTN…IRGEIDFVLV (81 aa)) folds into the S1 motif domain.

It belongs to the RNR ribonuclease family. RNase R subfamily.

It is found in the cytoplasm. It catalyses the reaction Exonucleolytic cleavage in the 3'- to 5'-direction to yield nucleoside 5'-phosphates.. In terms of biological role, 3'-5' exoribonuclease that releases 5'-nucleoside monophosphates and is involved in maturation of structured RNAs. The sequence is that of Ribonuclease R from Thermotoga maritima (strain ATCC 43589 / DSM 3109 / JCM 10099 / NBRC 100826 / MSB8).